The sequence spans 337 residues: Glucose transporter 2C (337 aa).

Positions 1–22 (MTERRDNVSHAPDAIEGPNDGA) are disordered. Residues 1–43 (MTERRDNVSHAPDAIEGPNDGAHAEDTSPGFFSLENLGVAQVQ) lie on the Cytoplasmic side of the membrane. The helical transmembrane segment at 44–64 (VVGGTLNGFSIGFVAVYILLY) threads the bilayer. The Extracellular portion of the chain corresponds to 65–119 (EVATNCSLFKTTEACKAVGSYGCEWKDTEVCSWKKECDSDSDGVNPCESLIGYSS). Asparagine 69 is a glycosylation site (N-linked (GlcNAc...) asparagine). The helical transmembrane segment at 120 to 140 (LYSGIFASAMIVGSMVGSIIA) threads the bilayer. Over 141–152 (GKCITMFGLKKS) the chain is Cytoplasmic. Residues 153-173 (FIIVGVMSVVASALNHISVAT) form a helical membrane-spanning segment. The Extracellular segment spans residues 174–175 (NE). Residues 176–196 (FWVLCAGRVLMGIGLGVVCVI) form a helical membrane-spanning segment. The Cytoplasmic portion of the chain corresponds to 197 to 214 (CPMYVNENAHPKLSKVDG). The helical transmembrane segment at 215–235 (VLFQVFITFGIMLAAMLGLIL) threads the bilayer. Residues 236-250 (DKTVNYDNDPDMAGR) lie on the Extracellular side of the membrane. A helical transmembrane segment spans residues 251–271 (FHGFCAVSSVLSVAMFLVGMF). Residues 272-300 (LRESTATFSQDDDGKADGGMDPNEYGWGQ) are Cytoplasmic-facing. A helical membrane pass occupies residues 301-321 (MLWPLFMGAVTAGTLQLTGIN). Residues 322–337 (AVMNYAPKITENLGMD) lie on the Extracellular side of the membrane.

Belongs to the major facilitator superfamily. Sugar transporter (TC 2.A.1.1) family.

Its subcellular location is the membrane. In terms of biological role, facilitative glucose transporter. In Trypanosoma brucei brucei, this protein is Glucose transporter 2C (THT2C).